We begin with the raw amino-acid sequence, 436 residues long: 3-ketoacyl-CoA thiolase (436 aa).

Cys99 serves as the catalytic Acyl-thioester intermediate. Residues His392 and Cys422 each act as proton acceptor in the active site.

The protein belongs to the thiolase-like superfamily. Thiolase family. As to quaternary structure, heterotetramer of two alpha chains (FadJ) and two beta chains (FadI).

It localises to the cytoplasm. It catalyses the reaction an acyl-CoA + acetyl-CoA = a 3-oxoacyl-CoA + CoA. It participates in lipid metabolism; fatty acid beta-oxidation. Functionally, catalyzes the final step of fatty acid oxidation in which acetyl-CoA is released and the CoA ester of a fatty acid two carbons shorter is formed. In Shewanella amazonensis (strain ATCC BAA-1098 / SB2B), this protein is 3-ketoacyl-CoA thiolase.